We begin with the raw amino-acid sequence, 901 residues long: Cyanophycin synthetase (901 aa).

The region spanning 224–478 (KRILAASGVP…VAGAVMDMLF (255 aa)) is the ATP-grasp domain. 493–499 (GTNGKTT) contributes to the ATP binding site.

It in the C-terminal section; belongs to the MurCDEF family. As to quaternary structure, homodimer.

The enzyme catalyses [L-4-(L-arginin-2-N-yl)aspartate](n) + L-aspartate + ATP = [L-4-(L-arginin-2-N-yl)aspartate](n)-L-aspartate + ADP + phosphate + H(+). The catalysed reaction is [L-4-(L-arginin-2-N-yl)aspartate](n)-L-aspartate + L-arginine + ATP = [L-4-(L-arginin-2-N-yl)aspartate](n+1) + ADP + phosphate + H(+). In terms of biological role, catalyzes the ATP-dependent polymerization of arginine and aspartate to multi-L-arginyl-poly-L-aspartic acid (cyanophycin; a water-insoluble reserve polymer). This Nostoc sp. (strain PCC 7120 / SAG 25.82 / UTEX 2576) protein is Cyanophycin synthetase (cphA).